Consider the following 550-residue polypeptide: MAESHIMSSEAPPKTNTGLNFRTNCRMVLNLLREKDCSVTFSPEQPLTPVTDLAVGFSNLSTFSGETPKRCLDLSNLGDETAPLPTESPDRISSGKVESPKAQFVQFDGLFTPDLGWKAKKCPRGNMNSVLPRLLCSTPSFKKTSGGQRSVSNKENEGELFKSPNCKPVALLLPQEVVDSQFSPTPENKVDISLDEDCEMNILGSPISADPPCLDGAHDDIKMQNLDGFADFFSVDEEEMENPPGAVGNLSSSMAILLSGPLLNQDIEVSNVNNISLNRSRLYRSPSMPEKLDRPMLKRPVRPLDSETPVRVKRRRSTSSSLQPQEENFQPQRRGTSLKKTLSLCDVDISTVLDEDCGHRQLIGDFTKVYALPTVTGRHQDLRYITGETLAALIHGDFSSLVEKIFIIDCRYPYEYDGGHIKGALNLHRQEEVTDYFLKQPLTPTMAQKRLIIIFHCEFSSERGPKMCRFLREEDRARNEYPSLYYPELYLLKGGYKDFFPEYKELCEPQSYCPMHHQDFREELLKFRTKCKTSVGDRKRREQIARIMKL.

Disordered stretches follow at residues 76-98 (NLGDETAPLPTESPDRISSGKVE) and 285-335 (SPSM…QRRG). The segment covering 290–310 (EKLDRPMLKRPVRPLDSETPV) has biased composition (basic and acidic residues). Over residues 322 to 335 (LQPQEENFQPQRRG) the composition is skewed to polar residues. Residues 401–508 (LVEKIFIIDC…FFPEYKELCE (108 aa)) form the Rhodanese domain. Cysteine 457 is an active-site residue.

It belongs to the MPI phosphatase family.

The catalysed reaction is O-phospho-L-tyrosyl-[protein] + H2O = L-tyrosyl-[protein] + phosphate. Tyrosine protein phosphatase which functions as a dosage-dependent inducer of mitotic progression. Directly dephosphorylates CDK1 and stimulates its kinase activity. In Xenopus laevis (African clawed frog), this protein is M-phase inducer phosphatase 1-B (cdc25-1-b).